We begin with the raw amino-acid sequence, 3046 residues long: Nucleosome-remodeling factor subunit BPTF (3046 aa).

A disordered region spans residues 1–232 (MRGRRGRPPK…DIPPLEFPKS (232 aa)). Over residues 22–33 (PAPPPPPPPPTS) the composition is skewed to pro residues. Over residues 62-72 (TRLSSPRGGSS) the composition is skewed to low complexity. The span at 78-87 (PPPPPAPPST) shows a compositional bias: pro residues. Gly residues predominate over residues 91–110 (GRGGRGGGGGRTGGGGGGGH). Positions 129–186 (HESEEEEEEEDMVSEEEEEEDGDAEETQDSEDDEEDEMEEDDDDSDYPEEMEDDDDDA) are enriched in acidic residues. Over residues 190–203 (TESSFRSHSTYSST) the composition is skewed to low complexity. The span at 205–215 (GRRKPRVHRPR) shows a compositional bias: basic residues. Phosphoserine is present on serine 216. In terms of domain architecture, DDT spans 240 to 300 (NEHIMNVIAI…LKAVLREEDT (61 aa)). The PHD-type 1 zinc-finger motif lies at 390–437 (DDHCRVCHKLGDLLCCETCSAVYHLECVKPPLEEVPEDEWQCEVCVAH). 2 stretches are compositionally biased toward basic and acidic residues: residues 567–609 (IDNV…SDDK) and 616–628 (EQGK…EVGD). Residues 567–774 (IDNVKSPEET…GAGKGASGST (208 aa)) are disordered. Position 572 is a phosphoserine (serine 572). Residues 574-604 (EETEKDKNETENDSKDAEKNREEFEDQSLEK) adopt a coiled-coil conformation. Polar residues-rich tracts occupy residues 631-653 (NSVS…SPSE) and 690-705 (TCES…SIQP). The tract at residues 640–749 (NTTNATSEET…PVSIQEEIVG (110 aa)) is interaction with KEAP1. Residues 706–723 (NLENSNSSSELNSSQSES) are compositionally biased toward low complexity. Positions 725–738 (KAADDPENGERESH) are enriched in basic and acidic residues. 2 positions are modified to phosphoserine: serine 763 and serine 817. The tract at residues 839 to 921 (YFKLGQEGKY…QLENNIPSSF (83 aa)) is interaction with MAZ. At lysine 880 the chain carries N6-acetyllysine. Residues 978-1007 (MTSIEREEKEKVKKKEKKQEEEETMQQATW) are a coiled coil. The interval 1057 to 1157 (YRKSLEGTKN…MKTESHVNCQ (101 aa)) is disordered. Threonine 1064 is modified (phosphothreonine). 2 stretches are compositionally biased toward basic and acidic residues: residues 1087 to 1102 (IKIE…KGSD) and 1113 to 1152 (DISK…KTES). Glycyl lysine isopeptide (Lys-Gly) (interchain with G-Cter in SUMO2) cross-links involve residues lysine 1088, lysine 1138, and lysine 1209. 4 disordered regions span residues 1215-1339 (KGIG…GNDF), 1371-1448 (IVSS…FRTR), 1465-1537 (GEST…NGKD), and 1605-1706 (NSSE…GESK). Composition is skewed to polar residues over residues 1220–1232 (TSTN…SESP), 1242–1257 (QSDS…ANND), and 1266–1285 (CSES…TTNK). A Phosphoserine modification is found at serine 1231. Positions 1287–1305 (YPKDRVLDDVSIRSPETKC) are enriched in basic and acidic residues. Serine 1300 is modified (phosphoserine). Position 1303 is a phosphothreonine (threonine 1303). Residue serine 1310 is modified to Phosphoserine. Residues 1372-1386 (VSSSKSALHSSVPKS) are compositionally biased toward low complexity. Polar residues-rich tracts occupy residues 1409 to 1426 (SESN…SIQD) and 1434 to 1444 (VQNSNESISEQ). Residues 1491–1525 (KKLEERPVNKCSDQIKLKNTTDKKNNENRESEKKG) show a composition bias toward basic and acidic residues. Residues 1629 to 1656 (TLPSTKESDSTQTTTPSASCPESNSVNQ) are compositionally biased toward polar residues. Residue lysine 1730 forms a Glycyl lysine isopeptide (Lys-Gly) (interchain with G-Cter in SUMO2) linkage. 2 disordered regions span residues 1973-2003 (VPET…TPKQ) and 2041-2070 (QAKK…STIS). Residues 2022–2050 (EIRAFAERVEKEKAQAVEQQAKKRLEQQK) are a coiled coil. Residues 2054-2070 (IATSTTSPTSSTTSTIS) show a composition bias toward low complexity. Phosphoserine is present on serine 2098. The residue at position 2155 (arginine 2155) is an Omega-N-methylarginine. The tract at residues 2160–2180 (TIRPNTSGSGGTTSNSQVITG) is disordered. Arginine 2162, arginine 2184, and arginine 2191 each carry asymmetric dimethylarginine. A compositionally biased stretch (polar residues) spans 2232 to 2256 (VSAPNTVSSTPGQKSLTSATSTSNI). Disordered stretches follow at residues 2232–2270 (VSAP…QQGQ), 2346–2549 (TAST…RPQL), 2714–2733 (QAAK…SKQN), and 2795–2858 (PCPP…ISTT). 2 stretches are compositionally biased toward low complexity: residues 2257 to 2270 (QSSA…QQGQ) and 2346 to 2362 (TAST…AGTG). Residues 2363–2375 (EQRQSKLSPQMQV) show a composition bias toward polar residues. Over residues 2391-2431 (PAEAQPQTAQPSAQPQPQTQPQSPAQPEVQTQPEVQTQTTV) the composition is skewed to low complexity. The span at 2432 to 2485 (SSHVPSEAQPTHAQSSKPQVAAQSQPQSNVQGQSPVRVQSPSQTRIRPSTPSQL) shows a compositional bias: polar residues. Serine 2465 is modified (phosphoserine). The segment covering 2486 to 2538 (SPGQQSQVQTTTSQPIPIQPHTSLQIPSQGQPQSQPQVQSSTQTLSSGQTLNQ) has biased composition (low complexity). Residues 2706-2732 (DKIDKEEKQAAKKRKREESVEQKRSKQ) adopt a coiled-coil conformation. The segment covering 2714–2729 (QAAKKRKREESVEQKR) has biased composition (basic and acidic residues). The segment covering 2795-2818 (PCPPVTPAPPAPPAPPPSPPPPPA) has biased composition (pro residues). The segment covering 2838–2847 (KREEEKDSSS) has biased composition (basic and acidic residues). Residues 2867 to 2918 (KLYCICKTPYDESKFYIGCDRCQNWYHGRCVGILQSEAELIDEYVCPQCQST) form a PHD-type 2 zinc finger. One can recognise a Bromo domain in the interval 2927–3031 (PLTEKDYEGL…SFFVQKLKGF (105 aa)).

Belongs to the PBTF family. In terms of assembly, interacts with MAZ. Interacts with KEAP1. Component of the NURF-1 ISWI chromatin remodeling complex (also called the nucleosome-remodeling factor (NURF) complex) at least composed of SMARCA1 (isoform 2), BPTF, RBBP4 and RBBP7. Within the complex interacts with isoform 2 of SMARCA1. Component of the BPFT-SMARCA1 complex at least composed of SMARCA1 (isoform 1), BPFT, RBBP4 and RBBP7; the complex is catalytically inactive and does not remodel chromatin. Within the complex interacts with isoform 1 of SMARCA1. Component of the NURF-5 ISWI chromatin remodeling complex at least composed of SMARCA5/SNF2H and BPTF. Within NURF-5 ISWI chromatin remodeling complex interacts with SMARCA5/SNF2H. In terms of processing, phosphorylation enhances DNA-binding. Post-translationally, highly susceptible to proteolysis. As to expression, ubiquitously expressed, with highest levels in testis. Present in kidney, liver and brain. In the brain, highest levels are found in motor cortex (at protein level).

The protein resides in the cytoplasm. It is found in the nucleus. In terms of biological role, regulatory subunit of the ATP-dependent NURF-1 and NURF-5 ISWI chromatin remodeling complexes, which form ordered nucleosome arrays on chromatin and facilitate access to DNA during DNA-templated processes such as DNA replication, transcription, and repair. The NURF-1 ISWI chromatin remodeling complex has a lower ATP hydrolysis rate than the NURF-5 ISWI chromatin remodeling complex. Within the NURF-1 ISWI chromatin-remodeling complex, binds to the promoters of En1 and En2 to positively regulate their expression and promote brain development. Histone-binding protein which binds to H3 tails trimethylated on 'Lys-4' (H3K4me3), which mark transcription start sites of active genes. Binds to histone H3 tails dimethylated on 'Lys-4' (H3K4Me2) to a lesser extent. May also regulate transcription through direct binding to DNA or transcription factors. This Homo sapiens (Human) protein is Nucleosome-remodeling factor subunit BPTF (BPTF).